We begin with the raw amino-acid sequence, 136 residues long: Transcription antitermination protein NusB (136 aa).

Belongs to the NusB family.

Functionally, involved in transcription antitermination. Required for transcription of ribosomal RNA (rRNA) genes. Binds specifically to the boxA antiterminator sequence of the ribosomal RNA (rrn) operons. The chain is Transcription antitermination protein NusB from Salinispora tropica (strain ATCC BAA-916 / DSM 44818 / JCM 13857 / NBRC 105044 / CNB-440).